Here is an 800-residue protein sequence, read N- to C-terminus: Fibroblast growth factor receptor 3 (800 aa).

A signal peptide spans 1-20 (MVPLCLLLYLATLVFPPVYS). Residues 21–122 (AHLLSPEPTD…YTVKVIDSLS (102 aa)) form the Ig-like C2-type 1 domain. Topologically, residues 21–363 (AHLLSPEPTD…EMEREDDYAD (343 aa)) are extracellular. C55 and C101 are joined by a disulfide. N77, N90, and N112 each carry an N-linked (GlcNAc...) asparagine glycan. The span at 124-136 (GDDEDYDEDEDEA) shows a compositional bias: acidic residues. A disordered region spans residues 124–143 (GDDEDYDEDEDEAGNGNAEA). Ig-like C2-type domains are found at residues 144–237 (PYWT…YQLD) and 246–348 (PILQ…AWLT). C169 and C221 are oxidised to a cystine. N-linked (GlcNAc...) asparagine glycosylation is found at N218, N255, N287, N308, and N321. Residues C268 and C332 are joined by a disulfide bond. The chain crosses the membrane as a helical span at residues 364–384 (ILIYVTSCVLFILTMVIIILC). The Cytoplasmic portion of the chain corresponds to 385 to 800 (RMWINTQKTL…HHHSNGVIRT (416 aa)). The Protein kinase domain occupies 460–739 (LTLGKPLGEG…RQLVEDHDRV (280 aa)). ATP is bound by residues 466–474 (LGEGCFGQV) and K496. Residue D605 is the Proton acceptor of the active site. Y635, Y636, Y712, and Y748 each carry phosphotyrosine; by autocatalysis. Residues 764-773 (DSNSTCSSGD) show a composition bias toward polar residues. Residues 764-800 (DSNSTCSSGDDSVFAHDPLPEEPCLPKHHHSNGVIRT) are disordered.

Belongs to the protein kinase superfamily. Tyr protein kinase family. Fibroblast growth factor receptor subfamily. Monomer. Homodimer after ligand binding. Post-translationally, autophosphorylated. Binding of FGF family members together with heparan sulfate proteoglycan or heparin promotes receptor dimerization and autophosphorylation on tyrosine residues. Autophosphorylation occurs in trans between the two FGFR molecules present in the dimer.

It is found in the cell membrane. It catalyses the reaction L-tyrosyl-[protein] + ATP = O-phospho-L-tyrosyl-[protein] + ADP + H(+). Present in an inactive conformation in the absence of bound ligand. Ligand binding leads to dimerization and activation by autophosphorylation on tyrosine residues. Tyrosine-protein kinase that acts as a cell-surface receptor for fibroblast growth factors and plays an essential role in the regulation of cell proliferation, differentiation and apoptosis. Plays an essential role in the regulation of chondrocyte differentiation, proliferation and apoptosis, and is required for normal skeleton development. Regulates both osteogenesis and postnatal bone mineralization by osteoblasts. Promotes apoptosis in chondrocytes, but can also promote cancer cell proliferation. Phosphorylates PLCG1, CBL and FRS2. Ligand binding leads to the activation of several signaling cascades. Activation of PLCG1 leads to the production of the cellular signaling molecules diacylglycerol and inositol 1,4,5-trisphosphate. Phosphorylation of FRS2 triggers recruitment of GRB2, GAB1, PIK3R1 and SOS1, and mediates activation of RAS, MAPK1/ERK2, MAPK3/ERK1 and the MAP kinase signaling pathway, as well as of the AKT1 signaling pathway. The chain is Fibroblast growth factor receptor 3 (fgfr3) from Danio rerio (Zebrafish).